A 288-amino-acid polypeptide reads, in one-letter code: T-lymphocyte activation antigen CD80 (288 aa).

A signal peptide spans 1–34 (MGHTRRQGTSPSKCPYLNFFQLLVLAGLSHFCSG). One can recognise an Ig-like V-type domain in the interval 35 to 135 (VIHVTKEVKE…FKREHLAEVT (101 aa)). Over 35-242 (VIHVTKEVKE…TTKQEHFPDN (208 aa)) the chain is Extracellular. 2 disulfides stabilise this stretch: cysteine 50–cysteine 116 and cysteine 162–cysteine 216. Asparagine 53, asparagine 89, asparagine 98, asparagine 186, asparagine 207, asparagine 211, asparagine 226, and asparagine 232 each carry an N-linked (GlcNAc...) asparagine glycan. The Ig-like C2-type domain maps to 145 to 230 (PSISDFEIPT…GHLRVNQTFN (86 aa)). Residues 243-263 (LLPSWAITLISVNGIFVICCL) traverse the membrane as a helical segment. 4 S-palmitoyl cysteine lipidation sites follow: cysteine 261, cysteine 262, cysteine 266, and cysteine 271. Topologically, residues 264-288 (TYCFAPRCRERRRNERLRRESVRPV) are cytoplasmic. Phosphoserine is present on serine 284.

As to quaternary structure, homodimer. Interacts with CTLA4; this interaction inhibits T-cell activation. Interacts with PDL1/CD274; this interaction blocks PDL1/PDCD1 binding and thus PDL1/CD274 inhibitory function. Interacts with CD28. In terms of assembly, (Microbial infection) Interacts with adenovirus subgroup B fiber proteins. (Microbial infection) Interacts with Orthopoxvirus OPG038/M2 protein, inhibiting the interaction with CTLA4/CD152. In terms of processing, palmitoylated by ZDHHC20; palmitoylation protects CD80 from ubiquitin-mediated degradation, regulating the protein stability, and ensures its accurate plasma membrane localization. As to expression, expressed on activated B-cells, macrophages and dendritic cells.

The protein resides in the cell membrane. Its function is as follows. Costimulatory molecule that belongs to the immunoglobulin superfamily that plays an important role in T-lymphocyte activation. Acts as the primary auxiliary signal augmenting the MHC/TCR signal in naive T-cells together with the CD28 receptor which is constitutively expressed on the cell surface of T-cells. In turn, activates different signaling pathways such as NF-kappa-B or MAPK leading to the production of different cytokines. In addition, CD28/CD80 costimulatory signal stimulates glucose metabolism and ATP synthesis of T-cells by activating the PI3K/Akt signaling pathway. Also acts as a regulator of PDL1/PDCD1 interactions to limit excess engagement of PDL1 and its inhibitory role in immune responses. Expressed on B-cells, plays a critical role in regulating interactions between B-cells and T-cells in both early and late germinal center responses, which are crucial for the generation of effective humoral immune responses. In terms of biological role, (Microbial infection) Acts as a receptor for adenovirus subgroup B. The sequence is that of T-lymphocyte activation antigen CD80 (CD80) from Homo sapiens (Human).